Reading from the N-terminus, the 2682-residue chain is 3-methylorcinaldehyde synthase (2682 aa).

The tract at residues 111–272 is N-terminal acylcarrier protein transacylase domain (SAT); sequence LIPLVVIEQL…TEITLYGAFH (162 aa). Cys154 serves as the catalytic Nucleophile; for transacylase activity. Residue His272 is the Proton donor/acceptor; for transacylase activity of the active site. Positions 401–826 constitute a Ketosynthase family 3 (KS3) domain; the sequence is ESDIAVIGMA…GSNASMIVMQ (426 aa). Active-site for beta-ketoacyl synthase activity residues include Cys573, His708, and His749. The malonyl-CoA:ACP transacylase (MAT) domain stretch occupies residues 947–1237; the sequence is FGGQVSTHIG…ITAMTSRALD (291 aa). The interval 1339-1468 is N-terminal hotdog fold; that stretch reads LTFVGFQDSS…GKIKFTNARD (130 aa). Residues 1339-1651 form the PKS/mFAS DH domain; it reads LTFVGFQDSS…YVKIPKLSMQ (313 aa). Positions 1367-1649 are product template (PT) domain; the sequence is LLLGHMTIQT…IAYVKIPKLS (283 aa). Residue His1371 is the Proton acceptor; for dehydratase activity of the active site. The interval 1496–1651 is C-terminal hotdog fold; sequence VDEVLANRSI…YVKIPKLSMQ (156 aa). The Proton donor; for dehydratase activity role is filled by Asp1555. The Carrier domain maps to 1723–1797; that stretch reads ENITERVKAV…DLMKVVTGVV (75 aa). O-(pantetheine 4'-phosphoryl)serine is present on Ser1757. The segment at 2021–2211 is methyltransferase domain; the sequence is EWPLNQVMYT…AGYGHVYWTE (191 aa). The tract at residues 2303–2548 is NADPH-binding (R) domain; it reads VTGATGGLGA…LGWTPADAIA (246 aa).

The protein operates within secondary metabolite biosynthesis; terpenoid biosynthesis. In terms of biological role, non-reducing polyketide synthase; part of the gene cluster that mediates the biosynthesis of eupenifeldin, a bistropolone meroterpenoid that acts as an antitumor agent. The first step of eupenifeldin biosynthesis is the biosynthesis of 3-methylorcinaldehyde performed by the non-reducing polyketide synthase eupA. Oxidative dearomatization of 3-methylorcinaldehyde likely catalyzed by the FAD-dependent monooxygenase eupB is followed by oxidative ring expansion by the 2-oxoglutarate-dependent dioxygenase eupC to provide the first tropolone metabolite, tropolone stipitaldehyde. In parallel, generation of sesquiterpene alpha-humulene from farnesylpyrophosphate (FPP) is catalyzed by the terpene cyclase eupE. The cytochrome P450 monooxygenase eupD then hydroxylates humulene to humulenol. The putative Diels-Alderase eupF probably catalyzes the formation of the tropolone-humulene skeleton by linking humulenol and the polyketide moiety. The short-chain dehydrogenase/reductase eupG and the flavin-dependent monooxygenase eupH are also essential for eupenifeldin biosynthesis and are likely the additional decorating enzymes of the tropolone-humulene skeleton to produce final eupenifeldin or derivatives. The chain is 3-methylorcinaldehyde synthase from Phoma sp.